A 1105-amino-acid polypeptide reads, in one-letter code: Protein phosphatase 1 regulatory subunit 26 (1105 aa).

4 disordered regions span residues 228–382, 444–468, 504–526, and 589–748; these read LNDK…NKLA, QSTY…DSLV, TSPE…AKAM, and LNRG…DSDD. Over residues 275 to 285 the composition is skewed to basic and acidic residues; the sequence is LLRKHASDSKL. Positions 306–317 are enriched in low complexity; sequence TKTSSPSPKSTP. Residues 359-368 show a composition bias toward polar residues; that stretch reads SPTSANSLTH. Over residues 451–460 the composition is skewed to pro residues; sequence TEPPPPPPEP. The span at 504-516 shows a compositional bias: polar residues; the sequence is TSPELGSQSSKLS. Over residues 602–612 the composition is skewed to low complexity; sequence SYSSGDKSSSL. Basic residues predominate over residues 628-647; it reads SKRKYKKRPKDGKSQCKKRV. A compositionally biased stretch (basic and acidic residues) spans 686 to 701; that stretch reads NSLEKSKKRREEKAVE. Residues 705–715 show a composition bias toward polar residues; sequence PSCSSSPQGNK. Over residues 733 to 742 the composition is skewed to basic and acidic residues; it reads RALDDAHESS.

It is found in the nucleus. The protein localises to the nucleolus. Its function is as follows. May inhibit phosphatase activity of protein phosphatase 1 (PP1) complexes. May positively regulate cell proliferation. In Xenopus laevis (African clawed frog), this protein is Protein phosphatase 1 regulatory subunit 26 (ppp1r26).